Consider the following 535-residue polypeptide: CTP synthase (535 aa).

An amidoligase domain region spans residues 1 to 267; that stretch reads MTKYIFVTGG…DQIVCDHLKL (267 aa). Serine 13 is a CTP binding site. Serine 13 provides a ligand contact to UTP. 14–19 is a binding site for ATP; the sequence is SLGKGI. Tyrosine 54 serves as a coordination point for L-glutamine. Aspartate 71 lines the ATP pocket. The Mg(2+) site is built by aspartate 71 and glutamate 141. Residues 148–150, 188–193, and lysine 224 each bind CTP; these read DIE and KTKPTQ. UTP-binding positions include 188-193 and lysine 224; that span reads KTKPTQ. 240-242 is an ATP binding site; the sequence is RDA. The Glutamine amidotransferase type-1 domain occupies 292-534; that stretch reads KIALVGKYVE…VRASITNKES (243 aa). Glycine 354 contacts L-glutamine. Cysteine 381 acts as the Nucleophile; for glutamine hydrolysis in catalysis. Residues 382 to 385, glutamate 405, and arginine 462 contribute to the L-glutamine site; that span reads LGMQ. Active-site residues include histidine 507 and glutamate 509.

It belongs to the CTP synthase family. As to quaternary structure, homotetramer.

The catalysed reaction is UTP + L-glutamine + ATP + H2O = CTP + L-glutamate + ADP + phosphate + 2 H(+). The enzyme catalyses L-glutamine + H2O = L-glutamate + NH4(+). It catalyses the reaction UTP + NH4(+) + ATP = CTP + ADP + phosphate + 2 H(+). The protein operates within pyrimidine metabolism; CTP biosynthesis via de novo pathway; CTP from UDP: step 2/2. Allosterically activated by GTP, when glutamine is the substrate; GTP has no effect on the reaction when ammonia is the substrate. The allosteric effector GTP functions by stabilizing the protein conformation that binds the tetrahedral intermediate(s) formed during glutamine hydrolysis. Inhibited by the product CTP, via allosteric rather than competitive inhibition. Its function is as follows. Catalyzes the ATP-dependent amination of UTP to CTP with either L-glutamine or ammonia as the source of nitrogen. Regulates intracellular CTP levels through interactions with the four ribonucleotide triphosphates. The protein is CTP synthase of Bacillus cereus (strain AH820).